Reading from the N-terminus, the 319-residue chain is Ribonuclease Z (319 aa).

Residues histidine 62, histidine 64, aspartate 66, histidine 67, histidine 145, aspartate 215, and histidine 273 each coordinate Zn(2+). Aspartate 66 serves as the catalytic Proton acceptor.

This sequence belongs to the RNase Z family. As to quaternary structure, homodimer. Zn(2+) is required as a cofactor.

It carries out the reaction Endonucleolytic cleavage of RNA, removing extra 3' nucleotides from tRNA precursor, generating 3' termini of tRNAs. A 3'-hydroxy group is left at the tRNA terminus and a 5'-phosphoryl group is left at the trailer molecule.. Zinc phosphodiesterase, which displays some tRNA 3'-processing endonuclease activity. Probably involved in tRNA maturation, by removing a 3'-trailer from precursor tRNA. This is Ribonuclease Z from Borrelia recurrentis (strain A1).